The sequence spans 448 residues: Trigger factor (448 aa).

The PPIase FKBP-type domain occupies 172 to 257 (GDRVTVDFVG…MKKIEWPHLP (86 aa)).

It belongs to the FKBP-type PPIase family. Tig subfamily.

It localises to the cytoplasm. It carries out the reaction [protein]-peptidylproline (omega=180) = [protein]-peptidylproline (omega=0). In terms of biological role, involved in protein export. Acts as a chaperone by maintaining the newly synthesized protein in an open conformation. Functions as a peptidyl-prolyl cis-trans isomerase. This Burkholderia orbicola (strain MC0-3) protein is Trigger factor.